Consider the following 393-residue polypeptide: 26S proteasome regulatory subunit 10B (393 aa).

Residue 178 to 185 (GPPGTGKT) participates in ATP binding.

The protein belongs to the AAA ATPase family.

The protein resides in the cytoplasm. Its subcellular location is the nucleus. The 26S proteasome is involved in the ATP-dependent degradation of ubiquitinated proteins. The regulatory (or ATPase) complex confers ATP dependency and substrate specificity to the 26S complex. The polypeptide is 26S proteasome regulatory subunit 10B (psmC6) (Dictyostelium discoideum (Social amoeba)).